Consider the following 207-residue polypeptide: Charged multivesicular body protein 3 (207 aa).

The tract at residues glutamine 174 to serine 207 is disordered. Residues histidine 183–serine 207 are a coiled coil. Basic and acidic residues predominate over residues histidine 183–serine 207.

Belongs to the SNF7 family. Probable core component of the endosomal sorting required for transport complex III (ESCRT-III).

The protein resides in the endosome membrane. In terms of biological role, probable core component of the endosomal sorting required for transport complex III (ESCRT-III) which is involved in multivesicular bodies (MVBs) formation and sorting of endosomal cargo proteins into MVBs. MVBs contain intraluminal vesicles (ILVs) that are generated by invagination and scission from the limiting membrane of the endosome and are delivered to lysosomes enabling degradation of membrane proteins. The sequence is that of Charged multivesicular body protein 3 (chmp3) from Dictyostelium discoideum (Social amoeba).